We begin with the raw amino-acid sequence, 601 residues long: Elongation factor 4 (601 aa).

A tr-type G domain is found at 7-189; the sequence is RNIRNFSIIA…AIVHRIPPPK (183 aa). GTP is bound by residues 19 to 24 and 136 to 139; these read DHGKST and NKID.

The protein belongs to the TRAFAC class translation factor GTPase superfamily. Classic translation factor GTPase family. LepA subfamily.

The protein resides in the cell inner membrane. The enzyme catalyses GTP + H2O = GDP + phosphate + H(+). In terms of biological role, required for accurate and efficient protein synthesis under certain stress conditions. May act as a fidelity factor of the translation reaction, by catalyzing a one-codon backward translocation of tRNAs on improperly translocated ribosomes. Back-translocation proceeds from a post-translocation (POST) complex to a pre-translocation (PRE) complex, thus giving elongation factor G a second chance to translocate the tRNAs correctly. Binds to ribosomes in a GTP-dependent manner. The polypeptide is Elongation factor 4 (Xanthomonas axonopodis pv. citri (strain 306)).